We begin with the raw amino-acid sequence, 453 residues long: DNA repair protein RadA (453 aa).

The C4-type zinc-finger motif lies at cysteine 10–cysteine 27. Glycine 95–serine 102 is an ATP binding site. Residues lysine 251–glycine 255 carry the RadA KNRFG motif motif. Residues aspartate 350–serine 453 are lon-protease-like.

Belongs to the RecA family. RadA subfamily.

Functionally, DNA-dependent ATPase involved in processing of recombination intermediates, plays a role in repairing DNA breaks. Stimulates the branch migration of RecA-mediated strand transfer reactions, allowing the 3' invading strand to extend heteroduplex DNA faster. Binds ssDNA in the presence of ADP but not other nucleotides, has ATPase activity that is stimulated by ssDNA and various branched DNA structures, but inhibited by SSB. Does not have RecA's homology-searching function. This chain is DNA repair protein RadA, found in Streptococcus pyogenes serotype M3 (strain ATCC BAA-595 / MGAS315).